Reading from the N-terminus, the 365-residue chain is tRNA/tmRNA (uracil-C(5))-methyltransferase (365 aa).

Positions 189, 217, 222, 238, and 298 each coordinate S-adenosyl-L-methionine. Residue Cys-323 is the Nucleophile of the active site. Glu-357 serves as the catalytic Proton acceptor.

This sequence belongs to the class I-like SAM-binding methyltransferase superfamily. RNA M5U methyltransferase family. TrmA subfamily.

It catalyses the reaction uridine(54) in tRNA + S-adenosyl-L-methionine = 5-methyluridine(54) in tRNA + S-adenosyl-L-homocysteine + H(+). The enzyme catalyses uridine(341) in tmRNA + S-adenosyl-L-methionine = 5-methyluridine(341) in tmRNA + S-adenosyl-L-homocysteine + H(+). Its function is as follows. Dual-specificity methyltransferase that catalyzes the formation of 5-methyluridine at position 54 (m5U54) in all tRNAs, and that of position 341 (m5U341) in tmRNA (transfer-mRNA). This Shewanella frigidimarina (strain NCIMB 400) protein is tRNA/tmRNA (uracil-C(5))-methyltransferase.